The primary structure comprises 508 residues: Photosystem II CP47 reaction center protein (508 aa).

The next 6 helical transmembrane spans lie at 21–36 (AVHI…WAGS), 101–115 (IVFS…IWHW), 140–156 (GIHL…FGAF), 203–218 (IAAG…FHLS), 237–252 (VLSS…AFVV), and 457–472 (TFAL…HGAR).

It belongs to the PsbB/PsbC family. PsbB subfamily. As to quaternary structure, PSII is composed of 1 copy each of membrane proteins PsbA, PsbB, PsbC, PsbD, PsbE, PsbF, PsbH, PsbI, PsbJ, PsbK, PsbL, PsbM, PsbT, PsbX, PsbY, PsbZ, Psb30/Ycf12, at least 3 peripheral proteins of the oxygen-evolving complex and a large number of cofactors. It forms dimeric complexes. The cofactor is Binds multiple chlorophylls. PSII binds additional chlorophylls, carotenoids and specific lipids..

It is found in the plastid. It localises to the chloroplast thylakoid membrane. Its function is as follows. One of the components of the core complex of photosystem II (PSII). It binds chlorophyll and helps catalyze the primary light-induced photochemical processes of PSII. PSII is a light-driven water:plastoquinone oxidoreductase, using light energy to abstract electrons from H(2)O, generating O(2) and a proton gradient subsequently used for ATP formation. The protein is Photosystem II CP47 reaction center protein of Brachypodium distachyon (Purple false brome).